A 173-amino-acid polypeptide reads, in one-letter code: MTIIVGIDPGSRVTGYGIIRQQGRHLTYLGSGCIRTVVDDMPTRLKLIYAGVSEIITQFRPDCMAIEQVFMAKNPDSALKLGQARGVAIVAGVNQDLPVFEYAARLVKQTVVGTGAADKKQVQHMVRSLLKLSASPQADAADALAIAITHCHFNQSLLRTSAAKVNPLAGRLR.

Catalysis depends on residues Asp-8, Glu-67, and Asp-139. Residues Asp-8, Glu-67, and Asp-139 each contribute to the Mg(2+) site.

Belongs to the RuvC family. Homodimer which binds Holliday junction (HJ) DNA. The HJ becomes 2-fold symmetrical on binding to RuvC with unstacked arms; it has a different conformation from HJ DNA in complex with RuvA. In the full resolvosome a probable DNA-RuvA(4)-RuvB(12)-RuvC(2) complex forms which resolves the HJ. Requires Mg(2+) as cofactor.

The protein localises to the cytoplasm. The catalysed reaction is Endonucleolytic cleavage at a junction such as a reciprocal single-stranded crossover between two homologous DNA duplexes (Holliday junction).. In terms of biological role, the RuvA-RuvB-RuvC complex processes Holliday junction (HJ) DNA during genetic recombination and DNA repair. Endonuclease that resolves HJ intermediates. Cleaves cruciform DNA by making single-stranded nicks across the HJ at symmetrical positions within the homologous arms, yielding a 5'-phosphate and a 3'-hydroxyl group; requires a central core of homology in the junction. The consensus cleavage sequence is 5'-(A/T)TT(C/G)-3'. Cleavage occurs on the 3'-side of the TT dinucleotide at the point of strand exchange. HJ branch migration catalyzed by RuvA-RuvB allows RuvC to scan DNA until it finds its consensus sequence, where it cleaves and resolves the cruciform DNA. This chain is Crossover junction endodeoxyribonuclease RuvC, found in Pectobacterium carotovorum subsp. carotovorum (strain PC1).